A 507-amino-acid chain; its full sequence is Monocarboxylate transporter 9 (507 aa).

Residues 1–12 (MVYRKPPDGGWG) lie on the Extracellular side of the membrane. A helical membrane pass occupies residues 13–33 (WVIVIVSFFTQFLCYGSPLAV). The Cytoplasmic portion of the chain corresponds to 34–52 (GVLYLEWLDAFGEGKGKTA). Residues 53–73 (WVGSLANGIGLLASPVCSICV) form a helical membrane-spanning segment. The Extracellular segment spans residues 74–79 (SSFGAR). Residues 80–100 (PVAIFSGFMVAGGLMMSSFAP) traverse the membrane as a helical segment. At 101–102 (NI) the chain is on the cytoplasmic side. A helical transmembrane segment spans residues 103 to 123 (YFLYLSYGIVVGLGCGLLYNA). Residues 124-136 (TVTITCQYFDKRR) lie on the Extracellular side of the membrane. A helical membrane pass occupies residues 137–157 (GLALGLISTGSSVGLFIYAAL). Over 158-163 (QRELIE) the chain is Cytoplasmic. A helical transmembrane segment spans residues 164–184 (LYGLDGCLLIVGALSLNILAC). At 185–302 (GSLMRPLESS…EETVVLFKNR (118 aa)) the chain is on the extracellular side. A helical membrane pass occupies residues 303-323 (VFSALFFAILLFDIGGFPPSL). Residues 324-340 (LMEDIARSANINEEDYH) are Cytoplasmic-facing. The helical transmembrane segment at 341 to 361 (MPLVSIIGIMTAIGKLILGIL) threads the bilayer. The Extracellular portion of the chain corresponds to 362 to 369 (ADFKWVNT). The helical transmembrane segment at 370–390 (LYLYVLTLLMMGAALLAIPFA) threads the bilayer. Topologically, residues 391–395 (RSYFT) are cytoplasmic. The chain crosses the membrane as a helical span at residues 396 to 416 (LAVLSGILGFLTGNWSIFPYV). The Extracellular portion of the chain corresponds to 417–430 (TTKTVGIEKLTHAY). Residues 431–451 (GILMFFAGLGNSLGPPIVGWF) traverse the membrane as a helical segment. Over 452–460 (YDWTQEYDT) the chain is Cytoplasmic. A helical transmembrane segment spans residues 461 to 481 (AFYFSGFCVLLGGFLLLLAAL). Residues 482-507 (PCWNACTDRSSKLPPNTYSYKVASSA) lie on the Extracellular side of the membrane.

It belongs to the major facilitator superfamily. Monocarboxylate porter (TC 2.A.1.13) family.

The protein resides in the cell membrane. The enzyme catalyses creatine(in) = creatine(out). It catalyses the reaction (R)-carnitine(in) = (R)-carnitine(out). In terms of biological role, extracellular pH-and Na(+)-sensitive low-affinity creatine transporter. Also functions as a pH-independent carnitine efflux transporter. The chain is Monocarboxylate transporter 9 (SLC16A9) from Gallus gallus (Chicken).